The sequence spans 528 residues: 2-isopropylmalate synthase (528 aa).

Residues 12–279 (IRIFDTTLRD…DSSINTPRIV (268 aa)) form the Pyruvate carboxyltransferase domain. Asp-21, His-214, His-216, and Asn-250 together coordinate Mn(2+). The segment at 401 to 528 (RLASMTISDV…TTEAPAPATA (128 aa)) is regulatory domain.

This sequence belongs to the alpha-IPM synthase/homocitrate synthase family. LeuA type 1 subfamily. In terms of assembly, homodimer. It depends on Mn(2+) as a cofactor.

It localises to the cytoplasm. It catalyses the reaction 3-methyl-2-oxobutanoate + acetyl-CoA + H2O = (2S)-2-isopropylmalate + CoA + H(+). Its pathway is amino-acid biosynthesis; L-leucine biosynthesis; L-leucine from 3-methyl-2-oxobutanoate: step 1/4. Catalyzes the condensation of the acetyl group of acetyl-CoA with 3-methyl-2-oxobutanoate (2-ketoisovalerate) to form 3-carboxy-3-hydroxy-4-methylpentanoate (2-isopropylmalate). This is 2-isopropylmalate synthase from Stenotrophomonas maltophilia (strain R551-3).